Here is a 211-residue protein sequence, read N- to C-terminus: Thiamine-phosphate synthase (211 aa).

Residues 35 to 39 and asparagine 67 contribute to the 4-amino-2-methyl-5-(diphosphooxymethyl)pyrimidine site; that span reads QLRDK. Residues aspartate 68 and aspartate 87 each contribute to the Mg(2+) site. A 4-amino-2-methyl-5-(diphosphooxymethyl)pyrimidine-binding site is contributed by serine 106. 132–134 serves as a coordination point for 2-[(2R,5Z)-2-carboxy-4-methylthiazol-5(2H)-ylidene]ethyl phosphate; sequence TGS. Lysine 135 contributes to the 4-amino-2-methyl-5-(diphosphooxymethyl)pyrimidine binding site. 2-[(2R,5Z)-2-carboxy-4-methylthiazol-5(2H)-ylidene]ethyl phosphate-binding positions include glycine 163 and 183 to 184; that span reads IS.

The protein belongs to the thiamine-phosphate synthase family. Requires Mg(2+) as cofactor.

It catalyses the reaction 2-[(2R,5Z)-2-carboxy-4-methylthiazol-5(2H)-ylidene]ethyl phosphate + 4-amino-2-methyl-5-(diphosphooxymethyl)pyrimidine + 2 H(+) = thiamine phosphate + CO2 + diphosphate. It carries out the reaction 2-(2-carboxy-4-methylthiazol-5-yl)ethyl phosphate + 4-amino-2-methyl-5-(diphosphooxymethyl)pyrimidine + 2 H(+) = thiamine phosphate + CO2 + diphosphate. The catalysed reaction is 4-methyl-5-(2-phosphooxyethyl)-thiazole + 4-amino-2-methyl-5-(diphosphooxymethyl)pyrimidine + H(+) = thiamine phosphate + diphosphate. The protein operates within cofactor biosynthesis; thiamine diphosphate biosynthesis; thiamine phosphate from 4-amino-2-methyl-5-diphosphomethylpyrimidine and 4-methyl-5-(2-phosphoethyl)-thiazole: step 1/1. Condenses 4-methyl-5-(beta-hydroxyethyl)thiazole monophosphate (THZ-P) and 2-methyl-4-amino-5-hydroxymethyl pyrimidine pyrophosphate (HMP-PP) to form thiamine monophosphate (TMP). This Methanoculleus marisnigri (strain ATCC 35101 / DSM 1498 / JR1) protein is Thiamine-phosphate synthase.